A 240-amino-acid chain; its full sequence is Hairy and enhancer of split-related protein HELT (240 aa).

The 56-residue stretch at 10-65 (RTPVSHKVIEKRRRDRINRCLNELGKTVPMALAKQSSGKLEKAEILEMTVQYLRAL) folds into the bHLH domain. N6-acetyllysine is present on Lys48. Residues 86-121 (FHYGYHECMKNLVHYLTTVERMETKDTKYARILAFL) form the Orange domain.

It belongs to the HEY family. In terms of assembly, self-associates. Interacts with HES5 and HEY2. Expressed in heart and testis.

The protein resides in the nucleus. In terms of biological role, transcriptional repressor which binds preferentially to the canonical E box sequence 5'-CACGCG-3'. Required for the development of GABAergic neurons. This chain is Hairy and enhancer of split-related protein HELT (Helt), found in Mus musculus (Mouse).